The chain runs to 128 residues: Fluoride-specific ion channel FluC (128 aa).

Transmembrane regions (helical) follow at residues isoleucine 5–alanine 25, leucine 35–phenylalanine 55, leucine 67–valine 87, and phenylalanine 96–leucine 116. Na(+) is bound by residues glycine 75 and threonine 78.

Belongs to the fluoride channel Fluc/FEX (TC 1.A.43) family.

It is found in the cell inner membrane. It carries out the reaction fluoride(in) = fluoride(out). Its activity is regulated as follows. Na(+) is not transported, but it plays an essential structural role and its presence is essential for fluoride channel function. Functionally, fluoride-specific ion channel. Important for reducing fluoride concentration in the cell, thus reducing its toxicity. This chain is Fluoride-specific ion channel FluC, found in Burkholderia orbicola (strain MC0-3).